Reading from the N-terminus, the 242-residue chain is Putative pyrimidine-specific ribonucleoside hydrolase RihB (242 aa).

The substrate site is built by Gln-156 and His-168.

It belongs to the IUNH family. RihB subfamily.

It carries out the reaction a pyrimidine ribonucleoside + H2O = a pyrimidine nucleobase + D-ribose. The polypeptide is Putative pyrimidine-specific ribonucleoside hydrolase RihB (rihB) (Shigella boydii serotype 4 (strain Sb227)).